A 389-amino-acid chain; its full sequence is MKFVDEAKILIVAGDGGNGCVSFRREKYIPKGGPDGGDGGDGGDVYMVADENLNTLIDYRFTKSYRAERGENGQSRDCTGKRGQDITINVPVGTRARDLATGEIIADLTVHGQKQMVAKGGFHGLGNTRFKSSVNRAPRQRTMGTPGESREVLLELMLLADVGMLGMPNAGKSTFIRAVSAAKPKVADYPFTTLVPSLGVVRMDSHQSFVVADIPGLIEGAADGAGLGIQFLKHLERCRVLLHLIDIDPIDGSDPVENAKIIISELEKYSDKLAQKPRWLVFNKVDLLDADEAKQKAQAIVEALGWEGDYYMIAAINQEGVKKLCWDIMEFLKVTPREQDIATALAAEEKVDFMWDDYHKEQLENPDLEDDDEDWDEEDDDGVEFIYQR.

One can recognise an Obg domain in the interval 1 to 159 (MKFVDEAKIL…REVLLELMLL (159 aa)). Residues 160-333 (ADVGMLGMPN…LCWDIMEFLK (174 aa)) enclose the OBG-type G domain. Residues 166-173 (GMPNAGKS), 191-195 (FTTLV), 213-216 (DIPG), 283-286 (NKVD), and 314-316 (AAI) each bind GTP. Mg(2+) is bound by residues serine 173 and threonine 193. Positions 362–389 (QLENPDLEDDDEDWDEEDDDGVEFIYQR) are disordered. Positions 364–383 (ENPDLEDDDEDWDEEDDDGV) are enriched in acidic residues.

This sequence belongs to the TRAFAC class OBG-HflX-like GTPase superfamily. OBG GTPase family. As to quaternary structure, monomer. The cofactor is Mg(2+).

Its subcellular location is the cytoplasm. Functionally, an essential GTPase which binds GTP, GDP and possibly (p)ppGpp with moderate affinity, with high nucleotide exchange rates and a fairly low GTP hydrolysis rate. Plays a role in control of the cell cycle, stress response, ribosome biogenesis and in those bacteria that undergo differentiation, in morphogenesis control. The protein is GTPase Obg of Proteus mirabilis (strain HI4320).